Consider the following 1331-residue polypeptide: MMEPSEDSFETMMERKNPSSKQMESSEGSSNTTVETPPGGRVEAAGLASGLAQEMGEQSIDLRQDMEEPSSGPHREIKDPPNDLLQDLEESCEGSHLEEGGPFGGAPGEMEEEEDNPWESQEDQDYYTDLAESEEDESPEEPDSSTVEVMGMVRSIISLYFRMQDLREQQRVAEEILMNAINKGQLPNPKQFSGDRREYHEFIVLCQLILQSYPRVFCNDRLRVGYIISHLSGMAMEWAGDLLERESSVIDDFPAFLEAMNDTFEYRQALRVAEDAMFNLRQGDRAAIEYINEFQSLVPTLGWPDEVLQAHLCQGLKEDIRQYLFRIPQPNSLENLITLVLQIEDKLAERRAILRLLPESRPRHLTWLDSPVPERWTVSTWLPNEFHPGIKRNHLFLLLLVRVNPYHSVAVQALVDSGATSNYMDEGFAQEHYVELYQKPYAESVQTADGSLVGNEPVWLYTEPLVCLHQNHQESLEFDIVASSKFSVVLGIKWLQLHAPEIDWVKGRCTFHSPYCLKNCFRPPPPCIALEHHAVSLLPGLPHQYSDLADVFNPKEADEETSDQPSSDGSDDLSESEPSELQQAGDSDQSEETFYDCASTAPWEPVGAGTQEKAKQEEFWDPKDMLTSRHDYVQMIPELFDQLHGATWFTKLELRGTIVEESMSIHQTEDVWKVAFGLELQDMASYQPFLICADPIIPQGVIHFILKDMIGLFVVSYGQDVLVYSMSQEEHYHHVRQVLVRFRYHYVYCSLQRSQFHRHTAEFLGFVVTPKGVKLNKSIVSTITGYPTPGSRKSLRNLMEFAFPYRHFVERFADITEPLVRQLQADLPFYWGDEEQEAFVGLKRAFRKAPLLYHPKPQNQFYLQTGVTKTSLHASLIQMDKRTGKKVCCAFYSRNISPMEVEASPAEMKILPIRAAFMVWCRYLENTEEPIMILLNKEDLASLNNDRLTVLLPGHWVFFFTHFNFDVMEMPSSEDDQPLPRRQRLGERAQQRRVATTTRPTMLVTMPAPTGDQSPESEDEEESEGALHPDEPNGQNLQQGYLALIPVDQIFNSFLAHFSMAQIRAVLLHFYRSLLFWKNLLAMAALLVMLRFRRRLALLPAPAADPARPPQRRSLRLFLDASLLTSSGIATAVTQLFTQMPPLVGTNALPAEELAELFLGPGPWQLNALRGLQMTPRFWQMLCQFFGIRGRALEGTQTHPSPHQSLAPHVEGDEYVVLREALQDDLQRFRQCGLHDGLQDTSQDAQDDVWALRPRQHLPTEAEVLARLTYIRSTQGGSVVIHRELTARDLIDFLASVYTQALPTLVEASPPREGATLEELPSDADEDAGLD.

4 disordered regions span residues 1-123 (MMEP…SQED), 128-147 (TDLA…SSTV), 556-595 (EADE…ETFY), and 971-1033 (PSSE…DEPN). Positions 19–30 (SSKQMESSEGSS) are enriched in low complexity. Composition is skewed to acidic residues over residues 109–123 (EMEE…SQED), 128–143 (TDLA…EEPD), and 569–578 (GSDDLSESEP). Over residues 992 to 1001 (RRVATTTRPT) the composition is skewed to low complexity. The span at 1015–1024 (PESEDEEESE) shows a compositional bias: acidic residues. The next 2 membrane-spanning stretches (helical) occupy residues 1070–1090 (FYRS…LVML) and 1117–1137 (LFLD…TQLF). A disordered region spans residues 1309–1331 (SPPREGATLEELPSDADEDAGLD). Over residues 1320–1331 (LPSDADEDAGLD) the composition is skewed to acidic residues.

It is found in the membrane. Functionally, plays an essential role in capillaries endothelial cells for the maintenance of feto-maternal interface and for development of the placenta. This chain is Retrotransposon-like protein 1 (RTL1), found in Bos taurus (Bovine).